A 463-amino-acid polypeptide reads, in one-letter code: uncharacterized protein (463 aa).

The region spanning 13–81 (IPLYQQLYRY…PRSGWFADYH (69 aa)) is the HTH gntR-type domain. Positions 41–60 (KRLLANQLSISQTTVERAYE) form a DNA-binding region, H-T-H motif. At Lys-308 the chain carries N6-(pyridoxal phosphate)lysine.

It in the C-terminal section; belongs to the class-I pyridoxal-phosphate-dependent aminotransferase family. The cofactor is pyridoxal 5'-phosphate.

This is an uncharacterized protein from Bacillus subtilis (strain 168).